The primary structure comprises 77 residues: Cysteine-rich protein 1 (77 aa).

The LIM zinc-binding domain occupies 2 to 63 (PKCPKCSKEV…HPCYAAMFGP (62 aa)). An N6-acetyllysine mark is found at Lys9 and Lys22. At Arg68 the chain carries Omega-N-methylarginine.

Functionally, seems to have a role in zinc absorption and may function as an intracellular zinc transport protein. The polypeptide is Cysteine-rich protein 1 (CRIP1) (Bos taurus (Bovine)).